Consider the following 526-residue polypeptide: Butyrophilin subfamily 1 member A1 (526 aa).

An N-terminal signal peptide occupies residues 1 to 26 (MAVFPNSCLAGCLLIFILLQLPKLDS). Ig-like V-type domains follow at residues 27-140 (APFD…VHLK) and 148-234 (PHIS…VEVS). Residues 27–242 (APFDVIGPQE…VSIPASFFPR (216 aa)) are Extracellular-facing. Disulfide bonds link Cys50-Cys124 and Cys164-Cys218. Asn55 carries N-linked (GlcNAc...) (complex) asparagine glycosylation. Asn215 carries N-linked (GlcNAc...) (hybrid) asparagine glycosylation. A helical membrane pass occupies residues 243-269 (LTPWMVAVAVILVVLGLLTIGSIFFTW). The Cytoplasmic segment spans residues 270 to 526 (RLYKERSRQR…IPLQPSQGVP (257 aa)). The region spanning 285–479 (SKEKLLEELK…LTICPVTDGL (195 aa)) is the B30.2/SPRY domain.

It belongs to the immunoglobulin superfamily. BTN/MOG family. As to quaternary structure, seems to associate with xanthine dehydrogenase/oxidase. As to expression, expressed in mammary tissue.

The protein resides in the membrane. Functionally, may function in the secretion of milk-fat droplets. May act as a specific membrane-associated receptor for the association of cytoplasmic droplets with the apical plasma membrane. Inhibits the proliferation of CD4 and CD8 T-cells activated by anti-CD3 antibodies, T-cell metabolism and IL2 and IFNG secretion. The sequence is that of Butyrophilin subfamily 1 member A1 (BTN1A1) from Bos taurus (Bovine).